The primary structure comprises 222 residues: Ornithine decarboxylase antizyme 1 (222 aa).

This sequence belongs to the ODC antizyme family. Interacts with ODC1 and thereby sterically blocks ODC homodimerization. Forms a ternary complex with PSMB4 and OAZ1 before PSMB4 is incorporated into the 20S proteasome. Interacts with AZIN2; this interaction disrupts the interaction between the antizyme and ODC1. Interacts with FAM171A1.

Functionally, ornithine decarboxylase (ODC) antizyme protein that negatively regulates ODC activity and intracellular polyamine biosynthesis and uptake in response to increased intracellular polyamine levels. Binds to ODC monomers, inhibiting the assembly of the functional ODC homodimer, and targets the monomers for ubiquitin-independent proteolytic destruction by the 26S proteasome. Triggers ODC degradation by inducing the exposure of a cryptic proteasome-interacting surface of ODC. Stabilizes AZIN2 by interfering with its ubiquitination. Also inhibits cellular uptake of polyamines by inactivating the polyamine uptake transporter. SMAD1/OAZ1/PSMB4 complex mediates the degradation of the CREBBP/EP300 repressor SNIP1. Involved in the translocation of AZIN2 from ER-Golgi intermediate compartment (ERGIC) to the cytosol. The polypeptide is Ornithine decarboxylase antizyme 1 (OAZ1) (Mesocricetus auratus (Golden hamster)).